We begin with the raw amino-acid sequence, 152 residues long: UPF0756 membrane protein JDM1_1594 (152 aa).

Helical transmembrane passes span alanine 25–isoleucine 45, tryptophan 52–phenylalanine 72, tryptophan 85–leucine 105, and leucine 115–isoleucine 135.

It belongs to the UPF0756 family.

The protein resides in the cell membrane. The chain is UPF0756 membrane protein JDM1_1594 from Lactiplantibacillus plantarum (strain JDM1) (Lactobacillus plantarum).